The chain runs to 94 residues: MIMKNCLLLGALLMGFTGVAMAQSVTVDVPSGYKVVVVPDSVSVPQAVSVATVPQTVYVAPAPAPAYRPHPYVRHLASVGEGMVIEHQIDDHHH.

An N-terminal signal peptide occupies residues M1 to A22.

This is an uncharacterized protein from Escherichia coli (strain K12).